Reading from the N-terminus, the 539-residue chain is Chaperonin GroEL (539 aa).

Residues 29–32, 86–90, Gly-413, 477–479, and Asp-493 contribute to the ATP site; these read TLGP, DGTTT, and DAL.

Belongs to the chaperonin (HSP60) family. In terms of assembly, forms a cylinder of 14 subunits composed of two heptameric rings stacked back-to-back. Interacts with the co-chaperonin GroES.

Its subcellular location is the cytoplasm. The enzyme catalyses ATP + H2O + a folded polypeptide = ADP + phosphate + an unfolded polypeptide.. In terms of biological role, together with its co-chaperonin GroES, plays an essential role in assisting protein folding. The GroEL-GroES system forms a nano-cage that allows encapsulation of the non-native substrate proteins and provides a physical environment optimized to promote and accelerate protein folding. This Clostridium perfringens (strain 13 / Type A) protein is Chaperonin GroEL.